Here is a 384-residue protein sequence, read N- to C-terminus: Protein cutoff (384 aa).

This sequence belongs to the DXO/Dom3Z family. In terms of assembly, component of the Rhino-Deadlock-Cutoff (RDC) complex, composed of rhi/rhino, del/deadlock and cuff/cutoff. Interacts with rhi/rhino; this interaction is indirect and is mediated by del/deadlock. Interacts with del/deadlock (via C-terminal); this interaction is direct. Interacts with Rat1.

The protein localises to the cytoplasm. Its subcellular location is the nucleus. It is found in the chromosome. Functionally, involved in the piRNA pathway in germline tissues. Part of the Rhino-Deadlock-Cutoff (RDC) complex that stimulates piRNA biogenesis from chromatin regions corresponding to dual-strand, but not single-stranded, piRNA clusters. Promotes transcription of long piRNA precursors by preventing termination at canonical poly(A) sites. As part of the RDC complex, is recruited to chromatin enriched in histone modification H3K9me3 and might contribute to complex interaction by binding nascent transcript nucleic acid chains. Associates with chromatin upon exposure to homologous piRNA. Suppresses cleavage at canonical poly(A) sites by blocking recruitment of the cleavage and polyadenylation specificity factor (CPSF) complex and prevents transcriptional termination by RNA polymerase II, facilitating transcriptional read-through. As part of the RDC complex, involved in suppression of splicing. Catalytically inactive, lacking 5'-3' exonuclease and pyrophosphohydrolase activities. Stabilizes uncapped piRNA precursors in the nucleus, probably by sequestering or blocking the exonuclease activity of Rat1. May also be involved in siRNA biogenesis from dual-strand piRNA clusters. The protein is Protein cutoff (cuff) of Drosophila melanogaster (Fruit fly).